A 178-amino-acid polypeptide reads, in one-letter code: Large ribosomal subunit protein uL6 (178 aa).

This sequence belongs to the universal ribosomal protein uL6 family. As to quaternary structure, part of the 50S ribosomal subunit.

In terms of biological role, this protein binds to the 23S rRNA, and is important in its secondary structure. It is located near the subunit interface in the base of the L7/L12 stalk, and near the tRNA binding site of the peptidyltransferase center. The polypeptide is Large ribosomal subunit protein uL6 (Sulfurovum sp. (strain NBC37-1)).